The primary structure comprises 590 residues: Arginine--tRNA ligase (590 aa).

The 'HIGH' region motif lies at 131–141 (PNIAKEMHVGH).

This sequence belongs to the class-I aminoacyl-tRNA synthetase family. In terms of assembly, monomer.

Its subcellular location is the cytoplasm. The catalysed reaction is tRNA(Arg) + L-arginine + ATP = L-arginyl-tRNA(Arg) + AMP + diphosphate. The polypeptide is Arginine--tRNA ligase (Synechococcus sp. (strain RCC307)).